Here is a 382-residue protein sequence, read N- to C-terminus: Anhydro-N-acetylmuramic acid kinase (382 aa).

22-29 (GTSMDGVD) is an ATP binding site.

This sequence belongs to the anhydro-N-acetylmuramic acid kinase family.

It catalyses the reaction 1,6-anhydro-N-acetyl-beta-muramate + ATP + H2O = N-acetyl-D-muramate 6-phosphate + ADP + H(+). It functions in the pathway amino-sugar metabolism; 1,6-anhydro-N-acetylmuramate degradation. It participates in cell wall biogenesis; peptidoglycan recycling. Catalyzes the specific phosphorylation of 1,6-anhydro-N-acetylmuramic acid (anhMurNAc) with the simultaneous cleavage of the 1,6-anhydro ring, generating MurNAc-6-P. Is required for the utilization of anhMurNAc either imported from the medium or derived from its own cell wall murein, and thus plays a role in cell wall recycling. In Burkholderia ambifaria (strain ATCC BAA-244 / DSM 16087 / CCUG 44356 / LMG 19182 / AMMD) (Burkholderia cepacia (strain AMMD)), this protein is Anhydro-N-acetylmuramic acid kinase.